A 160-amino-acid polypeptide reads, in one-letter code: MTVTPRPTADLVDEIGPDVRSCDLQLRQYGGRTDFAGPITTVRCFQDNALLKSVLSEPGDGGVLVIDGDGSVHTALVGDVIAELGRSNGWSGLIINGAVRDASTLRTLDIGIKALGTNPRKSTKTGEGIRDEAVEFGGVVFTPGDIAYSDDDGIVVIAAG.

Residues 78–81 (GDVI) and Arg-100 contribute to the substrate site. Asp-101 is a binding site for a divalent metal cation.

The protein belongs to the class II aldolase/RraA-like family. In terms of assembly, homotrimer. The cofactor is a divalent metal cation.

It carries out the reaction 4-hydroxy-4-methyl-2-oxoglutarate = 2 pyruvate. It catalyses the reaction oxaloacetate + H(+) = pyruvate + CO2. Its function is as follows. Catalyzes the aldol cleavage of 4-hydroxy-4-methyl-2-oxoglutarate (HMG) into 2 molecules of pyruvate. Also contains a secondary oxaloacetate (OAA) decarboxylase activity due to the common pyruvate enolate transition state formed following C-C bond cleavage in the retro-aldol and decarboxylation reactions. The chain is Putative 4-hydroxy-4-methyl-2-oxoglutarate aldolase from Mycolicibacterium vanbaalenii (strain DSM 7251 / JCM 13017 / BCRC 16820 / KCTC 9966 / NRRL B-24157 / PYR-1) (Mycobacterium vanbaalenii).